The primary structure comprises 352 residues: N-terminal EF-hand calcium-binding protein 1 (352 aa).

Ser-4 is subject to Phosphoserine. EF-hand domains lie at 26-61 (KGMS…GVLS) and 60-95 (LSGE…HLGE). 5 residues coordinate Ca(2+): Asp-39, Asn-41, Asp-43, Lys-45, and Glu-50. A coiled-coil region spans residues 135–163 (LLKETLNQLQSLQNSLECAMETTEEQTRQ). The tract at residues 155 to 202 (ETTEEQTRQERQGPSKPEVLSIQWPGKRSSRRVQRHNSFSPNSPQFNV) is disordered. Positions 190 to 202 (HNSFSPNSPQFNV) are enriched in polar residues. Phosphoserine occurs at positions 192 and 197. Residues 209–275 (EEDNQWMTQI…EEFQLALKHY (67 aa)) are a coiled coil. The 89-residue stretch at 252–340 (MLVQRQMSVT…LETPELTSTM (89 aa)) folds into the ABM domain.

As to quaternary structure, interacts with STX1. May interact with CPNE6.

It localises to the cytoplasm. This Rattus norvegicus (Rat) protein is N-terminal EF-hand calcium-binding protein 1 (Necab1).